Here is a 1321-residue protein sequence, read N- to C-terminus: Multidrug resistance protein pgp-1 (1321 aa).

Residues 1–77 (MLRNGSLRQS…YTTTLEKLLL (77 aa)) are Cytoplasmic-facing. An ABC transmembrane type-1 1 domain is found at 77–381 (LFIGTLVAVI…AGPQLAVLGT (305 aa)). The helical transmembrane segment at 78-98 (FIGTLVAVITGAGLPLMSILQ) threads the bilayer. 2 N-linked (GlcNAc...) asparagine glycosylation sites follow: Asn115 and Asn125. A helical membrane pass occupies residues 144–164 (AMTVGMWAAGQITVTCYLYVA). Asn190 carries an N-linked (GlcNAc...) asparagine glycan. Transmembrane regions (helical) follow at residues 213 to 233 (KIGM…VAFT), 240 to 260 (LVML…AKSM), 321 to 341 (ISFG…FYIG), and 350 to 370 (LNFG…MALG). The Cytoplasmic segment spans residues 371–753 (LAGPQLAVLG…LYHARPHALS (383 aa)). The region spanning 416 to 652 (ITVENVHFTY…QGLYYDLVTA (237 aa)) is the ABC transporter 1 domain. Residue 451–458 (GSSGCGKS) participates in ATP binding. 2 helical membrane passes run 754–774 (LFIG…YSVF) and 798–818 (LMFL…TFFM). Residues 754 to 1043 (LFIGMSTATI…ATSYFPEYAK (290 aa)) form the ABC transmembrane type-1 2 domain. Residue Asn850 is glycosylated (N-linked (GlcNAc...) asparagine). A run of 4 helical transmembrane segments spans residues 874 to 894 (FSTV…AFFY), 895 to 915 (GWQM…GQYL), 978 to 998 (IQGL…TCAY), and 1017 to 1037 (VLRV…ATSY). The Cytoplasmic segment spans residues 1038–1321 (FPEYAKATFA…LTQKQMTEKK (284 aa)). Positions 1077–1315 (VIFKNVRFAY…KGAYYKLTQK (239 aa)) constitute an ABC transporter 2 domain. 1112 to 1119 (GPSGCGKS) lines the ATP pocket.

It belongs to the ABC transporter superfamily. ABCB family. Multidrug resistance exporter (TC 3.A.1.201) subfamily. In terms of tissue distribution, intestinal cells.

Its subcellular location is the membrane. It catalyses the reaction ATP + H2O + xenobioticSide 1 = ADP + phosphate + xenobioticSide 2.. Its function is as follows. Energy-dependent efflux pump responsible for decreased drug accumulation in multidrug-resistant cells. The polypeptide is Multidrug resistance protein pgp-1 (pgp-1) (Caenorhabditis elegans).